The sequence spans 1072 residues: PWWP domain-containing protein 1 (1072 aa).

Residues 21-133 are disordered; sequence DSIQDPKVTP…ADEKELDLGL (113 aa). The span at 25 to 38 shows a compositional bias: low complexity; it reads DPKVTPDDTVVDSS. Basic and acidic residues predominate over residues 66 to 77; it reads RVLESERSEKDG. Acidic residues predominate over residues 96 to 128; it reads KDDESSEVKEEEEEEDGSDDQSSELGSEADEKE. The PWWP domain maps to 173-234; it reads VGDLVWGKVK…PAELIPFEPN (62 aa). Residues 365-387 form a disordered region; it reads KSPRSSVSTLEPHNRAPPRAPLS. The span at 366–375 shows a compositional bias: polar residues; it reads SPRSSVSTLE. The Nuclear localization signal 1 signature appears at 402–409; it reads SKKPTKVK. Disordered regions lie at residues 486–619, 681–738, 871–931, and 944–973; these read AIPG…GEAG, LSVS…KTNQ, KAEP…NGNR, and ENSS…SSSV. Basic and acidic residues predominate over residues 498-526; sequence SLDEEKGLAEKSKERMEERAAVLPEHGKS. Positions 545–568 are enriched in polar residues; the sequence is AGSSLQPLLESHTSASEGKSSTGS. 3 consecutive short sequence motifs (nuclear localization signal) follow at residues 596-603, 705-712, and 733-740; these read KKKKKEPD, VKRTEDPS, and LKKTNQLK. Residues 706–729 show a composition bias toward basic and acidic residues; it reads KRTEDPSKAGKKRLSSDRQDEIPS. Over residues 871 to 880 the composition is skewed to basic and acidic residues; that stretch reads KAEPREPENT. Residues 897–906 show a composition bias toward pro residues; it reads LHQPTLPPPN. A compositionally biased stretch (low complexity) spans 921-930; the sequence is SSSSNNGNGN. Residues 947 to 966 show a composition bias toward polar residues; it reads SKANTEPPQVTMTLNRNSGP.

It belongs to the PDP family. As to quaternary structure, interacts with MSI4/FVE. Component of the PRC2 (polycomb repressive complex 2) complex which regulates histone methylation on histone H3K27.

The protein localises to the nucleus. Its function is as follows. Together with PDP2, PDP3 and PDP6, interacts with MSI4/FVE and MSI5 to suppress FLC, MAF4 and MAF5 expression by regulating the function of the PRC2 complex and modulating H3K27me3 level, thereby promoting flowering. This chain is PWWP domain-containing protein 1, found in Arabidopsis thaliana (Mouse-ear cress).